The chain runs to 370 residues: DNA primase large subunit PriL (370 aa).

The [4Fe-4S] cluster site is built by C268, C341, C350, and C354.

Belongs to the eukaryotic-type primase large subunit family. In terms of assembly, heterodimer of a small subunit (PriS) and a large subunit (PriL). It depends on [4Fe-4S] cluster as a cofactor.

Regulatory subunit of DNA primase, an RNA polymerase that catalyzes the synthesis of short RNA molecules used as primers for DNA polymerase during DNA replication. Stabilizes and modulates the activity of the small subunit, increasing the rate of DNA synthesis, and conferring RNA synthesis capability. The DNA polymerase activity may enable DNA primase to also catalyze primer extension after primer synthesis. May also play a role in DNA repair. This is DNA primase large subunit PriL from Archaeoglobus fulgidus (strain ATCC 49558 / DSM 4304 / JCM 9628 / NBRC 100126 / VC-16).